The chain runs to 111 residues: Rubredoxin (111 aa).

One can recognise a Rubredoxin-like domain in the interval 11–62 (LDRFECRSCGYVYEPEKGDNKHDIAPETPFAELPINWRCPVCTAKKAAFTNI). Fe cation is bound by residues cysteine 16, cysteine 19, cysteine 49, and cysteine 52.

The protein belongs to the rubredoxin family. Fe(3+) serves as cofactor.

Its function is as follows. Rubredoxin is a small nonheme, iron protein lacking acid-labile sulfide. Its single Fe, chelated to 4 Cys, functions as an electron acceptor and may also stabilize the conformation of the molecule. Could be involved in hydrogenase-linked redox processes. The sequence is that of Rubredoxin (rub) from Nostoc sp. (strain PCC 7120 / SAG 25.82 / UTEX 2576).